A 233-amino-acid chain; its full sequence is C-type lectin domain family 2 member D5 (233 aa).

The disordered stretch occupies residues 1 to 52 (MPSSAHLQDPPPLLSRTLTQNEGQTSLRQSSSCGPSAASASESLSGSTESRI). Over 1 to 76 (MPSSAHLQDP…PLEYPAGLYC (76 aa)) the chain is Cytoplasmic. The segment covering 16 to 29 (RTLTQNEGQTSLRQ) has biased composition (polar residues). Residues 30 to 50 (SSSCGPSAASASESLSGSTES) show a composition bias toward low complexity. The chain crosses the membrane as a helical; Signal-anchor for type II membrane protein span at residues 77 to 97 (CYVVIIVLSVAVVALSVALSV). Topologically, residues 98-233 (KKTAQISTIN…KPNSYTSQCL (136 aa)) are extracellular. A C-type lectin domain is found at 119–228 (VGNKCFYFNE…KSICRKPNSY (110 aa)). An N-linked (GlcNAc...) asparagine glycan is attached at Asn-132.

It localises to the cell membrane. Its function is as follows. Lectin-type cell surface receptor. In Rattus norvegicus (Rat), this protein is C-type lectin domain family 2 member D5 (Ocil).